The following is a 233-amino-acid chain: uncharacterized protein (233 aa).

The protein belongs to the asfivirus H233R family.

This is an uncharacterized protein from African swine fever virus (isolate Tick/Malawi/Lil 20-1/1983) (ASFV).